A 267-amino-acid polypeptide reads, in one-letter code: Hydroxyethylthiazole kinase 2 (267 aa).

Residue M41 coordinates substrate. Positions 116 and 166 each coordinate ATP. A substrate-binding site is contributed by G193.

It belongs to the Thz kinase family. It depends on Mg(2+) as a cofactor.

It catalyses the reaction 5-(2-hydroxyethyl)-4-methylthiazole + ATP = 4-methyl-5-(2-phosphooxyethyl)-thiazole + ADP + H(+). Its pathway is cofactor biosynthesis; thiamine diphosphate biosynthesis; 4-methyl-5-(2-phosphoethyl)-thiazole from 5-(2-hydroxyethyl)-4-methylthiazole: step 1/1. Catalyzes the phosphorylation of the hydroxyl group of 4-methyl-5-beta-hydroxyethylthiazole (THZ). The chain is Hydroxyethylthiazole kinase 2 from Streptococcus pneumoniae (strain Hungary19A-6).